A 61-amino-acid polypeptide reads, in one-letter code: Large ribosomal subunit protein uL30 (61 aa).

The protein belongs to the universal ribosomal protein uL30 family. Part of the 50S ribosomal subunit.

The sequence is that of Large ribosomal subunit protein uL30 from Lactobacillus acidophilus (strain ATCC 700396 / NCK56 / N2 / NCFM).